The sequence spans 147 residues: Response regulator Rcp1 (147 aa).

Residues 10–135 form the Response regulatory domain; that stretch reads VILLVEDSKA…DLFKMVQGIE (126 aa). Asp68 is modified (4-aspartylphosphate).

Phosphorylated by Cph1.

Forms a two-component system with Cph1 in which it acts as receiver substrate. This chain is Response regulator Rcp1 (rcp1), found in Synechocystis sp. (strain ATCC 27184 / PCC 6803 / Kazusa).